Here is a 72-residue protein sequence, read N- to C-terminus: Translation initiation factor IF-1 (72 aa).

The 72-residue stretch at 1–72 (MAKQDVIELE…TRGRITYRYK (72 aa)) folds into the S1-like domain.

This sequence belongs to the IF-1 family. As to quaternary structure, component of the 30S ribosomal translation pre-initiation complex which assembles on the 30S ribosome in the order IF-2 and IF-3, IF-1 and N-formylmethionyl-tRNA(fMet); mRNA recruitment can occur at any time during PIC assembly.

It is found in the cytoplasm. Its function is as follows. One of the essential components for the initiation of protein synthesis. Stabilizes the binding of IF-2 and IF-3 on the 30S subunit to which N-formylmethionyl-tRNA(fMet) subsequently binds. Helps modulate mRNA selection, yielding the 30S pre-initiation complex (PIC). Upon addition of the 50S ribosomal subunit IF-1, IF-2 and IF-3 are released leaving the mature 70S translation initiation complex. The polypeptide is Translation initiation factor IF-1 (Staphylococcus aureus (strain USA300 / TCH1516)).